The primary structure comprises 227 residues: 7-cyano-7-deazaguanine synthase (227 aa).

Position 7–17 (7–17 (LSGGMDSLVTT)) interacts with ATP. Residues cysteine 187, cysteine 195, cysteine 198, and cysteine 201 each contribute to the Zn(2+) site.

This sequence belongs to the QueC family. It depends on Zn(2+) as a cofactor.

The catalysed reaction is 7-carboxy-7-deazaguanine + NH4(+) + ATP = 7-cyano-7-deazaguanine + ADP + phosphate + H2O + H(+). It functions in the pathway purine metabolism; 7-cyano-7-deazaguanine biosynthesis. In terms of biological role, catalyzes the ATP-dependent conversion of 7-carboxy-7-deazaguanine (CDG) to 7-cyano-7-deazaguanine (preQ(0)). The sequence is that of 7-cyano-7-deazaguanine synthase from Chlorobium phaeovibrioides (strain DSM 265 / 1930) (Prosthecochloris vibrioformis (strain DSM 265)).